A 185-amino-acid polypeptide reads, in one-letter code: Elongation factor P (185 aa).

The protein belongs to the elongation factor P family.

It is found in the cytoplasm. It functions in the pathway protein biosynthesis; polypeptide chain elongation. In terms of biological role, involved in peptide bond synthesis. Stimulates efficient translation and peptide-bond synthesis on native or reconstituted 70S ribosomes in vitro. Probably functions indirectly by altering the affinity of the ribosome for aminoacyl-tRNA, thus increasing their reactivity as acceptors for peptidyl transferase. The sequence is that of Elongation factor P from Paraburkholderia phymatum (strain DSM 17167 / CIP 108236 / LMG 21445 / STM815) (Burkholderia phymatum).